A 188-amino-acid polypeptide reads, in one-letter code: Putative manganese efflux pump MntP (188 aa).

6 helical membrane-spanning segments follow: residues 3-23 (LYAL…VALA), 35-55 (IAAT…AGWV), 70-90 (WAAF…GLSG), 104-126 (WLTV…GLAF), 140-160 (MATT…GVLF), and 167-187 (AGGL…LGLI).

This sequence belongs to the MntP (TC 9.B.29) family.

The protein resides in the cell inner membrane. Functionally, probably functions as a manganese efflux pump. The protein is Putative manganese efflux pump MntP of Neisseria meningitidis serogroup C / serotype 2a (strain ATCC 700532 / DSM 15464 / FAM18).